A 68-amino-acid chain; its full sequence is Protein SlyX homolog (68 aa).

Belongs to the SlyX family.

The protein is Protein SlyX homolog of Pseudomonas entomophila (strain L48).